Consider the following 334-residue polypeptide: Mitochondrial ribosome-associated GTPase 1 (334 aa).

In terms of domain architecture, CP-type G spans 36–209 (AKGLKKMQSS…LLDTPGVLAP (174 aa)). Residues 83-86 (NKMD), 153-158 (NVGKSS), and Gly205 contribute to the GTP site.

The protein belongs to the TRAFAC class YlqF/YawG GTPase family. MTG1 subfamily. Associates with the mitochondrial ribosome large subunit; the association occurs in a GTP-dependent manner.

Its subcellular location is the mitochondrion inner membrane. Functionally, plays a role in the regulation of the mitochondrial ribosome assembly and of translational activity. Displays mitochondrial GTPase activity. In Homo sapiens (Human), this protein is Mitochondrial ribosome-associated GTPase 1 (MTG1).